Consider the following 143-residue polypeptide: Nucleoside diphosphate kinase (143 aa).

ATP contacts are provided by lysine 11, phenylalanine 59, arginine 87, threonine 93, arginine 104, and asparagine 114. Histidine 117 functions as the Pros-phosphohistidine intermediate in the catalytic mechanism.

This sequence belongs to the NDK family. In terms of assembly, homotetramer. Mg(2+) serves as cofactor.

The protein localises to the cytoplasm. The enzyme catalyses a 2'-deoxyribonucleoside 5'-diphosphate + ATP = a 2'-deoxyribonucleoside 5'-triphosphate + ADP. It carries out the reaction a ribonucleoside 5'-diphosphate + ATP = a ribonucleoside 5'-triphosphate + ADP. Functionally, major role in the synthesis of nucleoside triphosphates other than ATP. The ATP gamma phosphate is transferred to the NDP beta phosphate via a ping-pong mechanism, using a phosphorylated active-site intermediate. This is Nucleoside diphosphate kinase from Alcanivorax borkumensis (strain ATCC 700651 / DSM 11573 / NCIMB 13689 / SK2).